We begin with the raw amino-acid sequence, 170 residues long: Peptide deformylase 2 (170 aa).

Residues Cys-94 and His-136 each contribute to the Fe cation site. Residue Glu-137 is part of the active site. His-140 is a Fe cation binding site.

This sequence belongs to the polypeptide deformylase family. Fe(2+) serves as cofactor.

The enzyme catalyses N-terminal N-formyl-L-methionyl-[peptide] + H2O = N-terminal L-methionyl-[peptide] + formate. Removes the formyl group from the N-terminal Met of newly synthesized proteins. Requires at least a dipeptide for an efficient rate of reaction. N-terminal L-methionine is a prerequisite for activity but the enzyme has broad specificity at other positions. The sequence is that of Peptide deformylase 2 from Xanthomonas axonopodis pv. citri (strain 306).